Consider the following 155-residue polypeptide: Transcription antitermination protein NusB (155 aa).

This sequence belongs to the NusB family.

Involved in transcription antitermination. Required for transcription of ribosomal RNA (rRNA) genes. Binds specifically to the boxA antiterminator sequence of the ribosomal RNA (rrn) operons. This chain is Transcription antitermination protein NusB, found in Ralstonia nicotianae (strain ATCC BAA-1114 / GMI1000) (Ralstonia solanacearum).